We begin with the raw amino-acid sequence, 1432 residues long: Gag-Pol polyprotein (1432 aa).

Gly-2 is lipidated: N-myristoyl glycine; by host. Positions 7-31 (ILSGGKLDDWEKIRLRPGGKKQYRI) are interaction with Gp41. The segment at 8-43 (LSGGKLDDWEKIRLRPGGKKQYRIKHLVWASRELDR) is interaction with host CALM1. Positions 12–19 (KLDDWEKI) are interaction with host AP3D1. The interaction with membrane phosphatidylinositol 4,5-bisphosphate and RNA stretch occupies residues 14 to 33 (DDWEKIRLRPGGKKQYRIKH). A Nuclear export signal motif is present at residues 16–22 (WEKIRLR). Residues 26 to 32 (KKQYRIK) carry the Nuclear localization signal motif. The tract at residues 73-77 (EEIKS) is interaction with membrane phosphatidylinositol 4,5-bisphosphate. Phosphotyrosine; by host is present on Tyr-132. Residues 189–227 (NTIGGHQAAMQMLKDTINEEAAEWDRVHPVHAGPVAPGQ) are interaction with human PPIA/CYPA and NUP153. A dimerization/Multimerization of capsid protein p24 region spans residues 277 to 363 (YSPVSILDIR…GGPGHKARVL (87 aa)). CCHC-type zinc fingers lie at residues 389-406 (VKCFNCGKQGHIAKNCRA) and 410-427 (KGCWKCGKEGHQMKDCTE). Residues 443-482 (EAREFSPEQTRANSPTSREPRVRRGDPLPETGAEGQGTVS) form a disordered region. Residues 449–459 (PEQTRANSPTS) show a composition bias toward polar residues. Residues 460 to 469 (REPRVRRGDP) are compositionally biased toward basic and acidic residues. The interval 486 to 490 (PQITL) is dimerization of protease. The region spanning 505-574 (REALLDTGAD…TPVNIIGRNM (70 aa)) is the Peptidase A2 domain. The active-site For protease activity; shared with dimeric partner is Asp-510. Dimerization of protease regions lie at residues 534-540 (GIGGFIK) and 573-585 (NMLTQLGCTLNFP). Residues 628–818 (EGKISRIGPE…PPFLWMGYEL (191 aa)) form the Reverse transcriptase domain. The Mg(2+) site is built by Asp-694, Asp-769, and Asp-770. Residues 811–819 (FLWMGYELH) are RT 'primer grip'. The Tryptophan repeat motif motif lies at 982–998 (WETWWTDYWQATWIPEW). One can recognise an RNase H type-1 domain in the interval 1018-1141 (IMGAETFYVD…VDKLVSSGIR (124 aa)). Asp-1027, Glu-1062, Asp-1082, and Asp-1133 together coordinate Mg(2+). An Integrase-type zinc finger spans residues 1147 to 1188 (DGIDKAQEEHEKYHSNWRAMASDFNLPPVVAKEIVASCDKCQ). Residues His-1156, His-1160, Cys-1184, and Cys-1187 each coordinate Zn(2+). Residues 1198 to 1348 (VDCSPGIWQL…SAGERIIDII (151 aa)) form the Integrase catalytic domain. Asp-1208, Asp-1260, and Glu-1296 together coordinate Mg(2+). The integrase-type DNA-binding region spans 1367–1414 (FRVYYRDSRDPIWKGPAKLLWKGEGAVVIQDNSEIKVVPRRKAKIIRD).

Homotrimer; further assembles as hexamers of trimers. Interacts with gp41 (via C-terminus). Interacts with host CALM1; this interaction induces a conformational change in the Matrix protein, triggering exposure of the myristate group. Interacts with host AP3D1; this interaction allows the polyprotein trafficking to multivesicular bodies during virus assembly. Part of the pre-integration complex (PIC) which is composed of viral genome, matrix protein, Vpr and integrase. In terms of assembly, homodimer; the homodimer further multimerizes as homohexamers or homopentamers. Interacts with human PPIA/CYPA; This interaction stabilizes the capsid. Interacts with human NUP153. Interacts with host PDZD8; this interaction stabilizes the capsid. Interacts with monkey TRIM5; this interaction destabilizes the capsid. As to quaternary structure, homodimer, whose active site consists of two apposed aspartic acid residues. Heterodimer of p66 RT and p51 RT (RT p66/p51). Heterodimerization of RT is essential for DNA polymerase activity. The overall folding of the subdomains is similar in p66 RT and p51 RT but the spatial arrangements of the subdomains are dramatically different. In terms of assembly, homotetramer; may further associate as a homohexadecamer. Part of the pre-integration complex (PIC) which is composed of viral genome, matrix protein, Vpr and integrase. Interacts with human SMARCB1/INI1 and human PSIP1/LEDGF isoform 1. Interacts with human KPNA3; this interaction might play a role in nuclear import of the pre-integration complex. Interacts with human NUP153; this interaction might play a role in nuclear import of the pre-integration complex. It depends on Mg(2+) as a cofactor. In terms of processing, specific enzymatic cleavages by the viral protease yield mature proteins. The protease is released by autocatalytic cleavage. The polyprotein is cleaved during and after budding, this process is termed maturation. Proteolytic cleavage of p66 RT removes the RNase H domain to yield the p51 RT subunit. Nucleocapsid protein p7 might be further cleaved after virus entry. Post-translationally, tyrosine phosphorylated presumably in the virion by a host kinase. Phosphorylation is apparently not a major regulator of membrane association. Phosphorylated possibly by host MAPK1; this phosphorylation is necessary for Pin1-mediated virion uncoating. In terms of processing, methylated by host PRMT6, impairing its function by reducing RNA annealing and the initiation of reverse transcription.

The protein localises to the host cell membrane. It localises to the host endosome. The protein resides in the host multivesicular body. Its subcellular location is the virion membrane. It is found in the host nucleus. The protein localises to the host cytoplasm. It localises to the virion. It carries out the reaction Specific for a P1 residue that is hydrophobic, and P1' variable, but often Pro.. It catalyses the reaction Endohydrolysis of RNA in RNA/DNA hybrids. Three different cleavage modes: 1. sequence-specific internal cleavage of RNA. Human immunodeficiency virus type 1 and Moloney murine leukemia virus enzymes prefer to cleave the RNA strand one nucleotide away from the RNA-DNA junction. 2. RNA 5'-end directed cleavage 13-19 nucleotides from the RNA end. 3. DNA 3'-end directed cleavage 15-20 nucleotides away from the primer terminus.. The catalysed reaction is 3'-end directed exonucleolytic cleavage of viral RNA-DNA hybrid.. The enzyme catalyses DNA(n) + a 2'-deoxyribonucleoside 5'-triphosphate = DNA(n+1) + diphosphate. Its activity is regulated as follows. Protease: The viral protease is inhibited by many synthetic protease inhibitors (PIs), such as amprenavir, atazanavir, indinavir, loprinavir, nelfinavir, ritonavir and saquinavir. Use of protease inhibitors in tritherapy regimens permit more ambitious therapeutic strategies. Reverse transcriptase/ribonuclease H: RT can be inhibited either by nucleoside RT inhibitors (NRTIs) or by non nucleoside RT inhibitors (NNRTIs). NRTIs act as chain terminators, whereas NNRTIs inhibit DNA polymerization by binding a small hydrophobic pocket near the RT active site and inducing an allosteric change in this region. Classical NRTIs are abacavir, adefovir (PMEA), didanosine (ddI), lamivudine (3TC), stavudine (d4T), tenofovir (PMPA), zalcitabine (ddC), and zidovudine (AZT). Classical NNRTIs are atevirdine (BHAP U-87201E), delavirdine, efavirenz (DMP-266), emivirine (I-EBU), and nevirapine (BI-RG-587). The tritherapies used as a basic effective treatment of AIDS associate two NRTIs and one NNRTI. Its function is as follows. Mediates, with Gag polyprotein, the essential events in virion assembly, including binding the plasma membrane, making the protein-protein interactions necessary to create spherical particles, recruiting the viral Env proteins, and packaging the genomic RNA via direct interactions with the RNA packaging sequence (Psi). Gag-Pol polyprotein may regulate its own translation, by the binding genomic RNA in the 5'-UTR. At low concentration, the polyprotein would promote translation, whereas at high concentration, the polyprotein would encapsidate genomic RNA and then shut off translation. Functionally, targets the polyprotein to the plasma membrane via a multipartite membrane-binding signal, that includes its myristoylated N-terminus. Matrix protein is part of the pre-integration complex. Implicated in the release from host cell mediated by Vpu. Binds to RNA. In terms of biological role, forms the conical core that encapsulates the genomic RNA-nucleocapsid complex in the virion. Most core are conical, with only 7% tubular. The core is constituted by capsid protein hexamer subunits. The core is disassembled soon after virion entry. Host restriction factors such as TRIM5-alpha or TRIMCyp bind retroviral capsids and cause premature capsid disassembly, leading to blocks in reverse transcription. Capsid restriction by TRIM5 is one of the factors which restricts HIV-1 to the human species. Host PIN1 apparently facilitates the virion uncoating. On the other hand, interactions with PDZD8 or CYPA stabilize the capsid. Encapsulates and protects viral dimeric unspliced genomic RNA (gRNA). Binds these RNAs through its zinc fingers. Acts as a nucleic acid chaperone which is involved in rearangement of nucleic acid secondary structure during gRNA retrotranscription. Also facilitates template switch leading to recombination. As part of the polyprotein, participates in gRNA dimerization, packaging, tRNA incorporation and virion assembly. Its function is as follows. Aspartyl protease that mediates proteolytic cleavages of Gag and Gag-Pol polyproteins during or shortly after the release of the virion from the plasma membrane. Cleavages take place as an ordered, step-wise cascade to yield mature proteins. This process is called maturation. Displays maximal activity during the budding process just prior to particle release from the cell. Also cleaves Nef and Vif, probably concomitantly with viral structural proteins on maturation of virus particles. Hydrolyzes host EIF4GI and PABP1 in order to shut off the capped cellular mRNA translation. The resulting inhibition of cellular protein synthesis serves to ensure maximal viral gene expression and to evade host immune response. Also mediates cleavage of host YTHDF3. Mediates cleavage of host CARD8, thereby activating the CARD8 inflammasome, leading to the clearance of latent HIV-1 in patient CD4(+) T-cells after viral reactivation; in contrast, HIV-1 can evade CARD8-sensing when its protease remains inactive in infected cells prior to viral budding. Functionally, multifunctional enzyme that converts the viral RNA genome into dsDNA in the cytoplasm, shortly after virus entry into the cell. This enzyme displays a DNA polymerase activity that can copy either DNA or RNA templates, and a ribonuclease H (RNase H) activity that cleaves the RNA strand of RNA-DNA heteroduplexes in a partially processive 3' to 5' endonucleasic mode. Conversion of viral genomic RNA into dsDNA requires many steps. A tRNA(3)-Lys binds to the primer-binding site (PBS) situated at the 5'-end of the viral RNA. RT uses the 3' end of the tRNA primer to perform a short round of RNA-dependent minus-strand DNA synthesis. The reading proceeds through the U5 region and ends after the repeated (R) region which is present at both ends of viral RNA. The portion of the RNA-DNA heteroduplex is digested by the RNase H, resulting in a ssDNA product attached to the tRNA primer. This ssDNA/tRNA hybridizes with the identical R region situated at the 3' end of viral RNA. This template exchange, known as minus-strand DNA strong stop transfer, can be either intra- or intermolecular. RT uses the 3' end of this newly synthesized short ssDNA to perform the RNA-dependent minus-strand DNA synthesis of the whole template. RNase H digests the RNA template except for two polypurine tracts (PPTs) situated at the 5'-end and near the center of the genome. It is not clear if both polymerase and RNase H activities are simultaneous. RNase H probably can proceed both in a polymerase-dependent (RNA cut into small fragments by the same RT performing DNA synthesis) and a polymerase-independent mode (cleavage of remaining RNA fragments by free RTs). Secondly, RT performs DNA-directed plus-strand DNA synthesis using the PPTs that have not been removed by RNase H as primers. PPTs and tRNA primers are then removed by RNase H. The 3' and 5' ssDNA PBS regions hybridize to form a circular dsDNA intermediate. Strand displacement synthesis by RT to the PBS and PPT ends produces a blunt ended, linear dsDNA copy of the viral genome that includes long terminal repeats (LTRs) at both ends. In terms of biological role, catalyzes viral DNA integration into the host chromosome, by performing a series of DNA cutting and joining reactions. This enzyme activity takes place after virion entry into a cell and reverse transcription of the RNA genome in dsDNA. The first step in the integration process is 3' processing. This step requires a complex comprising the viral genome, matrix protein, Vpr and integrase. This complex is called the pre-integration complex (PIC). The integrase protein removes 2 nucleotides from each 3' end of the viral DNA, leaving recessed CA OH's at the 3' ends. In the second step, the PIC enters cell nucleus. This process is mediated through integrase and Vpr proteins, and allows the virus to infect a non dividing cell. This ability to enter the nucleus is specific of lentiviruses, other retroviruses cannot and rely on cell division to access cell chromosomes. In the third step, termed strand transfer, the integrase protein joins the previously processed 3' ends to the 5' ends of strands of target cellular DNA at the site of integration. The 5'-ends are produced by integrase-catalyzed staggered cuts, 5 bp apart. A Y-shaped, gapped, recombination intermediate results, with the 5'-ends of the viral DNA strands and the 3' ends of target DNA strands remaining unjoined, flanking a gap of 5 bp. The last step is viral DNA integration into host chromosome. This involves host DNA repair synthesis in which the 5 bp gaps between the unjoined strands are filled in and then ligated. Since this process occurs at both cuts flanking the HIV genome, a 5 bp duplication of host DNA is produced at the ends of HIV-1 integration. Alternatively, Integrase may catalyze the excision of viral DNA just after strand transfer, this is termed disintegration. This Homo sapiens (Human) protein is Gag-Pol polyprotein (gag-pol).